Reading from the N-terminus, the 163-residue chain is Campylobacter invasion antigen D (163 aa).

An MKD motif is present at residues lysine 135–leucine 145.

As to quaternary structure, interacts with the host cell protein IQGAP1, thus displacing RACGAP1 from the IQGAP1 complex.

The protein localises to the secreted. It is found in the host cytoplasm. The protein resides in the host cytosol. In terms of biological role, effector protein required for the development of acute disease and colon inflammatory lesions. Required for maximal host cell invasion and maximal secretion of the inflammatory chemokine interleukin-8 (IL-8) from host cells. Acts by activating the host MAP kinase signaling pathways ERK-1/2 and p38 to promote both cellular invasion and the release of IL-8. CiaD mediated activation of ERK-1/2 leads to the phosphorylation of host cortactin (CTTN) on serine residues and association of cortactin with N-WASP, promoting actin cytoskeleton rearrangement, membrane ruffling and host cell invasion. In addition, maximal host cell invasion requires interaction with the host cell protein IQGAP1, a Ras GTPase-activating-like protein. Binding to IQGAP1 facilitates the activation of the Rho GTPases RAC1 and CDC42, further promoting actin reorganization and bacterial uptake. CiaD promotes RAC1 activation by excluding RACGAP1 from the IQGAP1 complex, preventing the deactivation of RAC1. CiaD probably activates ERK signaling upstream or independently of IQGAP1. This Campylobacter jejuni subsp. jejuni serotype O:2 (strain ATCC 700819 / NCTC 11168) protein is Campylobacter invasion antigen D.